The sequence spans 324 residues: Serine carboxypeptidase II-1 (324 aa).

An N-linked (GlcNAc...) asparagine glycan is attached at Asn-10. The active site involves Ser-41. 2 disulfides stabilise this stretch: Cys-109–Cys-121 and Cys-145–Cys-170. A propeptide spans 150 to 162 (LHRRRLIKGRRPW) (linker peptide). Asn-191 carries N-linked (GlcNAc...) asparagine glycosylation. Residues Asp-239 and His-291 contribute to the active site.

The protein belongs to the peptidase S10 family. As to quaternary structure, carboxypeptidase II is a dimer, where each monomer is composed of two chains linked by a disulfide bond. In terms of processing, the linker peptide is endoproteolytically excised during enzyme maturation.

The enzyme catalyses Preferential release of a C-terminal arginine or lysine residue.. The polypeptide is Serine carboxypeptidase II-1 (CXP;2-1) (Hordeum vulgare (Barley)).